Reading from the N-terminus, the 244-residue chain is Tyrosine recombinase XerD-like (244 aa).

The Core-binding (CB) domain maps to 1 to 73; that stretch reads MRDRISAFLE…ACNQFLYFLY (73 aa). Residues 90-244 form the Tyr recombinase domain; sequence AEKKTEKPEI…KTVLTLEKYR (155 aa). Catalysis depends on residues Lys-150 and Arg-211. Catalysis depends on Tyr-243, which acts as the O-(3'-phospho-DNA)-tyrosine intermediate.

The protein belongs to the 'phage' integrase family. XerD-like subfamily.

The protein localises to the cytoplasm. Putative tyrosine recombinase. Not involved in the cutting and rejoining of the recombining DNA molecules on dif(SL) site. This is Tyrosine recombinase XerD-like from Streptococcus pneumoniae (strain CGSP14).